The chain runs to 181 residues: MIRHIAIFLCSLLMCSTTFADSVTSVSLGALLTALNERMLLMKDVAAYKMKHHLPIEDFTREQNVFAEAEEEAKNNGLDPHSITPFIRSLMDASKAIQYRYLAQWRTGSEPSFPIQTLSVTRQRIRQLDNQMLIIISQRLMVGAFSHDDMVWLRAQFNAPNLNESDISNVLAALSLVRRAR.

The first 20 residues, 1–20 (MIRHIAIFLCSLLMCSTTFA), serve as a signal peptide directing secretion. The region spanning 21–102 (DSVTSVSLGA…ASKAIQYRYL (82 aa)) is the Chorismate mutase domain. The substrate site is built by arginine 38, lysine 49, aspartate 58, glutamate 62, and glutamine 98.

The protein localises to the periplasm. It carries out the reaction chorismate = prephenate. The protein operates within metabolic intermediate biosynthesis; prephenate biosynthesis; prephenate from chorismate: step 1/1. Its function is as follows. Catalyzes the Claisen rearrangement of chorismate to prephenate. The protein is Monofunctional chorismate mutase of Salmonella typhimurium.